Here is a 476-residue protein sequence, read N- to C-terminus: Glycogen synthase (476 aa).

Lys-15 is a binding site for ADP-alpha-D-glucose.

The protein belongs to the glycosyltransferase 1 family. Bacterial/plant glycogen synthase subfamily.

The catalysed reaction is [(1-&gt;4)-alpha-D-glucosyl](n) + ADP-alpha-D-glucose = [(1-&gt;4)-alpha-D-glucosyl](n+1) + ADP + H(+). Its pathway is glycan biosynthesis; glycogen biosynthesis. Its function is as follows. Synthesizes alpha-1,4-glucan chains using ADP-glucose. This chain is Glycogen synthase, found in Bacillus cereus (strain ATCC 14579 / DSM 31 / CCUG 7414 / JCM 2152 / NBRC 15305 / NCIMB 9373 / NCTC 2599 / NRRL B-3711).